A 510-amino-acid polypeptide reads, in one-letter code: NAD(P)H-quinone oxidoreductase subunit 2, chloroplastic (510 aa).

A run of 12 helical transmembrane segments spans residues 24 to 44 (LLLFNGSFIFPECILIFGLIL), 59 to 79 (WFYFISSTSLVMSITALLFRW), 99 to 119 (IFQFLILLCSTLCIPLSVEYI), 124 to 144 (MAITEFLLFVLTATLGGMFLC), 149 to 169 (LITIFVAPECFSLCSYLLSGY), 183 to 203 (YLLMGGASSSILVHGFSWLYG), 229 to 249 (ISIALISITVGIGFKLSPAPF), 295 to 315 (WHLLLEILAILSMILGNLIAI), 323 to 343 (MLAYSSIGQIGYVIIGIIVGD), 347 to 367 (GYASMITYMLFYISMNLGTFA), 395 to 415 (ALSSALCLLSLGGLPPLAGFF), and 418 to 438 (LHLFWCGWQAGLYFLVSIGLL).

Belongs to the complex I subunit 2 family. NDH is composed of at least 16 different subunits, 5 of which are encoded in the nucleus.

It localises to the plastid. The protein localises to the chloroplast thylakoid membrane. It catalyses the reaction a plastoquinone + NADH + (n+1) H(+)(in) = a plastoquinol + NAD(+) + n H(+)(out). The catalysed reaction is a plastoquinone + NADPH + (n+1) H(+)(in) = a plastoquinol + NADP(+) + n H(+)(out). In terms of biological role, NDH shuttles electrons from NAD(P)H:plastoquinone, via FMN and iron-sulfur (Fe-S) centers, to quinones in the photosynthetic chain and possibly in a chloroplast respiratory chain. The immediate electron acceptor for the enzyme in this species is believed to be plastoquinone. Couples the redox reaction to proton translocation, and thus conserves the redox energy in a proton gradient. In Allium textile (Textile onion), this protein is NAD(P)H-quinone oxidoreductase subunit 2, chloroplastic.